The primary structure comprises 388 residues: Succinate--CoA ligase [ADP-forming] subunit beta (388 aa).

The 237-residue stretch at 9-245 (KALLKEYGMP…KSQENERELK (237 aa)) folds into the ATP-grasp domain. Residues K46, 53–55 (GRG), E100, Y103, and E108 each bind ATP. Residues N200 and D214 each coordinate Mg(2+). Residues N265 and 322–324 (GIV) each bind substrate.

This sequence belongs to the succinate/malate CoA ligase beta subunit family. Heterotetramer of two alpha and two beta subunits. Requires Mg(2+) as cofactor.

The catalysed reaction is succinate + ATP + CoA = succinyl-CoA + ADP + phosphate. The enzyme catalyses GTP + succinate + CoA = succinyl-CoA + GDP + phosphate. The protein operates within carbohydrate metabolism; tricarboxylic acid cycle; succinate from succinyl-CoA (ligase route): step 1/1. In terms of biological role, succinyl-CoA synthetase functions in the citric acid cycle (TCA), coupling the hydrolysis of succinyl-CoA to the synthesis of either ATP or GTP and thus represents the only step of substrate-level phosphorylation in the TCA. The beta subunit provides nucleotide specificity of the enzyme and binds the substrate succinate, while the binding sites for coenzyme A and phosphate are found in the alpha subunit. The polypeptide is Succinate--CoA ligase [ADP-forming] subunit beta (Acinetobacter baumannii (strain AB307-0294)).